The primary structure comprises 360 residues: Protein RecA (360 aa).

Position 69–76 (69–76 (GPESSGKT)) interacts with ATP.

The protein belongs to the RecA family.

It localises to the cytoplasm. Can catalyze the hydrolysis of ATP in the presence of single-stranded DNA, the ATP-dependent uptake of single-stranded DNA by duplex DNA, and the ATP-dependent hybridization of homologous single-stranded DNAs. It interacts with LexA causing its activation and leading to its autocatalytic cleavage. The protein is Protein RecA of Trichodesmium erythraeum (strain IMS101).